The sequence spans 92 residues: DNA/RNA-binding protein Alba (92 aa).

The residue at position 11 (lysine 11) is an N6-acetyllysine.

This sequence belongs to the histone-like Alba family. In terms of processing, acetylated. Acetylation at Lys-11 decreases DNA-binding affinity.

The protein localises to the cytoplasm. Its subcellular location is the chromosome. Functionally, binds double-stranded DNA tightly but without sequence specificity. Involved in DNA compaction. In Pyrobaculum neutrophilum (strain DSM 2338 / JCM 9278 / NBRC 100436 / V24Sta) (Thermoproteus neutrophilus), this protein is DNA/RNA-binding protein Alba.